Consider the following 261-residue polypeptide: Small ribosomal subunit protein uS2 (261 aa).

Ser2 bears the N-acetylserine mark. The disordered stretch occupies residues 212–261 (QNAAEEAKAEETEEAPAAEAETEWTGETDDVDWADSGATPAAEDAAASNW). Acidic residues predominate over residues 222–244 (ETEEAPAAEAETEWTGETDDVDW).

Belongs to the universal ribosomal protein uS2 family. Component of the small ribosomal subunit. Mature ribosomes consist of a small (40S) and a large (60S) subunit. The 40S subunit contains about 33 different proteins and 1 molecule of RNA (18S). The 60S subunit contains about 49 different proteins and 3 molecules of RNA (25S, 5.8S and 5S). Interacts with RPS21.

The protein resides in the cytoplasm. In terms of biological role, required for the assembly and/or stability of the 40S ribosomal subunit. Required for the processing of the 20S rRNA-precursor to mature 18S rRNA in a late step of the maturation of 40S ribosomal subunits. This chain is Small ribosomal subunit protein uS2, found in Candida tropicalis (Yeast).